The primary structure comprises 350 residues: Biotin synthase (350 aa).

The 228-residue stretch at 41–268 (NEVQISRLLS…KSRVRLSAGR (228 aa)) folds into the Radical SAM core domain. Residues Cys-56, Cys-60, and Cys-63 each coordinate [4Fe-4S] cluster. [2Fe-2S] cluster contacts are provided by Cys-100, Cys-131, Cys-191, and Arg-263.

The protein belongs to the radical SAM superfamily. Biotin synthase family. In terms of assembly, homodimer. It depends on [4Fe-4S] cluster as a cofactor. [2Fe-2S] cluster serves as cofactor.

The catalysed reaction is (4R,5S)-dethiobiotin + (sulfur carrier)-SH + 2 reduced [2Fe-2S]-[ferredoxin] + 2 S-adenosyl-L-methionine = (sulfur carrier)-H + biotin + 2 5'-deoxyadenosine + 2 L-methionine + 2 oxidized [2Fe-2S]-[ferredoxin]. It participates in cofactor biosynthesis; biotin biosynthesis; biotin from 7,8-diaminononanoate: step 2/2. Catalyzes the conversion of dethiobiotin (DTB) to biotin by the insertion of a sulfur atom into dethiobiotin via a radical-based mechanism. In Shewanella halifaxensis (strain HAW-EB4), this protein is Biotin synthase.